Reading from the N-terminus, the 184-residue chain is Endoribonuclease YbeY (184 aa).

Zn(2+) contacts are provided by H151, H155, and H161.

This sequence belongs to the endoribonuclease YbeY family. The cofactor is Zn(2+).

The protein localises to the cytoplasm. In terms of biological role, single strand-specific metallo-endoribonuclease involved in late-stage 70S ribosome quality control and in maturation of the 3' terminus of the 16S rRNA. This is Endoribonuclease YbeY from Prochlorococcus marinus (strain NATL2A).